A 112-amino-acid chain; its full sequence is MLVLRSAALFVAAALFEIGGAWLVWQGVREHRGWLWIGAGVMALGVYGFVATLQPDAEFGRILAAYGGVFVAGSLAWGMVADGYRPDRWDVTGALICLAGMTVIMYAPRGGN.

4 consecutive transmembrane segments (helical) span residues 8 to 28 (ALFVAAALFEIGGAWLVWQGV), 33 to 53 (GWLWIGAGVMALGVYGFVATL), 62 to 82 (ILAAYGGVFVAGSLAWGMVAD), and 91 to 111 (VTGALICLAGMTVIMYAPRGG).

Belongs to the UPF0060 family.

The protein resides in the cell membrane. The polypeptide is UPF0060 membrane protein SAV_4756 (Streptomyces avermitilis (strain ATCC 31267 / DSM 46492 / JCM 5070 / NBRC 14893 / NCIMB 12804 / NRRL 8165 / MA-4680)).